A 232-amino-acid chain; its full sequence is Ribose-5-phosphate isomerase A (232 aa).

Substrate contacts are provided by residues 31–34, 87–90, and 100–103; these read TGST, DGAD, and KGGG. Glu109 acts as the Proton acceptor in catalysis. Lys127 contacts substrate.

This sequence belongs to the ribose 5-phosphate isomerase family. As to quaternary structure, homodimer.

It catalyses the reaction aldehydo-D-ribose 5-phosphate = D-ribulose 5-phosphate. It participates in carbohydrate degradation; pentose phosphate pathway; D-ribose 5-phosphate from D-ribulose 5-phosphate (non-oxidative stage): step 1/1. Functionally, catalyzes the reversible conversion of ribose-5-phosphate to ribulose 5-phosphate. The polypeptide is Ribose-5-phosphate isomerase A (Bifidobacterium adolescentis (strain ATCC 15703 / DSM 20083 / NCTC 11814 / E194a)).